Reading from the N-terminus, the 280-residue chain is Antiactivator FleN (280 aa).

ATP-binding positions include 19–26 (KGGVGKTN), Glu-153, Asn-181, 215–217 (PYD), and Arg-221.

Belongs to the ParA family. In terms of assembly, forms homodimers. Interacts with FleQ.

ATP-binding allows dimerization and subsequent antagonistic effect against FleQ. Functionally, ATPase that plays an important role in maintaining flagellar number in Pseudomonas aeruginosa. Exhibits anti-activator activity against FleQ, the global transcriptional regulator of flagellar genes. In Pseudomonas aeruginosa (strain ATCC 15692 / DSM 22644 / CIP 104116 / JCM 14847 / LMG 12228 / 1C / PRS 101 / PAO1), this protein is Antiactivator FleN.